A 569-amino-acid chain; its full sequence is MQLMEYTQLALFLGLLALMSPVLGRFIGRAVLRGEQTWMHSVLGPVERLIYRASGIRPEARQSWRQYAASLCAFSAAGFLMTFGVLMLQDKLPLNPQGFPGLSWHLAFNTAVSFLTNTNWQSYAGESTVSHFSQMVGLAYHNFVSAAAGLAVAVAVMRGLASQESKTIGNFWADLVRSVLYVLLPISLVLAVVLVGQGVVQTMSAGTEVATLEGGRQFIAMGPTASQVAIKMLGTNGGGFFNANAAHPLENPTALSNLLQMLAIFIIPSSLVFTLGGAVSNRRHAWTVWFVMACLFMVGACSLYRAETLGTPLLTEVAQAPVTNMEGKEVRFGIFGSAMFATVTTDASCGAVNAMHDSLTPLGGLVTLVNMQMGEVIFGGVGSGLYGMVLFILLTVFLAGLMVGRTPDYLGKRIEGREVTLAMLALIIAATPPLLFSAVAAVSGWGQAALNNAGAHGFSEILYAYTSGVQNNGSAFAGLNANSPAWNVTIALAMLIGRFGIMLPMLGVAGSMASRKARPIGEFSFPVSGFTFGLLLTLVIVIVGALTYLPALALGPVVEHFQMLDGLLH.

Transmembrane regions (helical) follow at residues 3–23, 68–88, 136–156, 179–199, 259–279, 284–304, 384–404, 422–442, 490–510, and 534–554; these read LMEYTQLALFLGLLALMSPVL, AASLCAFSAAGFLMTFGVLML, VGLAYHNFVSAAAGLAVAVAV, VLYVLLPISLVLAVVLVGQGV, LQMLAIFIIPSSLVFTLGGAV, HAWTVWFVMACLFMVGACSLY, GLYGMVLFILLTVFLAGLMVG, AMLALIIAATPPLLFSAVAAV, IALAMLIGRFGIMLPMLGVAG, and LLLTLVIVIVGALTYLPALAL.

Belongs to the KdpA family. The system is composed of three essential subunits: KdpA, KdpB and KdpC.

Its subcellular location is the cell inner membrane. Its function is as follows. Part of the high-affinity ATP-driven potassium transport (or Kdp) system, which catalyzes the hydrolysis of ATP coupled with the electrogenic transport of potassium into the cytoplasm. This subunit binds the periplasmic potassium ions and delivers the ions to the membrane domain of KdpB through an intramembrane tunnel. This Nitratidesulfovibrio vulgaris (strain ATCC 29579 / DSM 644 / CCUG 34227 / NCIMB 8303 / VKM B-1760 / Hildenborough) (Desulfovibrio vulgaris) protein is Potassium-transporting ATPase potassium-binding subunit.